The sequence spans 135 residues: Small ribosomal subunit protein uS12 (135 aa).

Residue D89 is modified to 3-methylthioaspartic acid. The segment at G106 to K135 is disordered. Residues R111–K123 are compositionally biased toward basic residues. Low complexity predominate over residues A124–K135.

It belongs to the universal ribosomal protein uS12 family. In terms of assembly, part of the 30S ribosomal subunit. Contacts proteins S8 and S17. May interact with IF1 in the 30S initiation complex.

Functionally, with S4 and S5 plays an important role in translational accuracy. In terms of biological role, interacts with and stabilizes bases of the 16S rRNA that are involved in tRNA selection in the A site and with the mRNA backbone. Located at the interface of the 30S and 50S subunits, it traverses the body of the 30S subunit contacting proteins on the other side and probably holding the rRNA structure together. The combined cluster of proteins S8, S12 and S17 appears to hold together the shoulder and platform of the 30S subunit. The chain is Small ribosomal subunit protein uS12 from Hydrogenobaculum sp. (strain Y04AAS1).